The primary structure comprises 264 residues: Polyneuridine aldehyde esterase (264 aa).

The propeptide occupies 1–6 (MHSAAN). The AB hydrolase-1 domain occupies 12 to 122 (HFVLVHGGCL…MMPDPNHSLT (111 aa)). Active-site residues include Ser-87, Asp-216, and His-244. Residue Ser-87 participates in 16-epivellosimine binding.

It belongs to the AB hydrolase superfamily. In terms of assembly, homodimer; homodimerizes in aqueous solutions at pH 7.0. As to expression, mainly expressed in roots and, to a lower level, in leaves.

It carries out the reaction polyneuridine aldehyde + H2O = 16-epivellosimine + methanol + CO2. It functions in the pathway alkaloid biosynthesis; ajmaline biosynthesis. Inhibited by DEPC and HgCl(2). Its function is as follows. Hydrolase involved in the biosynthesis of ajmaline-type monoterpenoid indole alkaloids (MIAs) natural products, important plant-derived pharmaceuticals used in the therapy of heart disorders. Catalyzes the hydrolysis of polyneuridine aldehyde into epi-vellosimine, precursor of vomilenine, an intermediate chemical in the biosynthesis of ajmaline. The sequence is that of Polyneuridine aldehyde esterase from Rauvolfia serpentina (Serpentine wood).